We begin with the raw amino-acid sequence, 393 residues long: Large ribosomal subunit protein uL2m (393 aa).

The N-terminal 43 residues, 1 to 43 (MLVLGSLRSALSCSSTASLISKRNPCYPYGILCRTLSQSVKLW), are a transit peptide targeting the mitochondrion. Residues 337–393 (AMNKCDHPHGGGRGKSKSNKLSMSPWGQLAKGYKTRRGKNQNRMKVKDRPRGKDARL) form a disordered region. Residues 369-380 (YKTRRGKNQNRM) are compositionally biased toward basic residues. Positions 381 to 393 (KVKDRPRGKDARL) are enriched in basic and acidic residues.

It belongs to the universal ribosomal protein uL2 family. In terms of assembly, component of the mitochondrial large ribosomal subunit (mt-LSU). Mature yeast 74S mitochondrial ribosomes consist of a small (37S) and a large (54S) subunit. The 37S small subunit contains a 15S ribosomal RNA (15S mt-rRNA) and 34 different proteins. The 54S large subunit contains a 21S rRNA (21S mt-rRNA) and 46 different proteins. uL2m has a Na/K ligand binding site.

It is found in the mitochondrion. Its function is as follows. Component of the mitochondrial ribosome (mitoribosome), a dedicated translation machinery responsible for the synthesis of mitochondrial genome-encoded proteins, including at least some of the essential transmembrane subunits of the mitochondrial respiratory chain. The mitoribosomes are attached to the mitochondrial inner membrane and translation products are cotranslationally integrated into the membrane. The protein is Large ribosomal subunit protein uL2m (RML2) of Saccharomyces cerevisiae (strain ATCC 204508 / S288c) (Baker's yeast).